Here is a 630-residue protein sequence, read N- to C-terminus: GATA-type transcription factor SRE1 (630 aa).

2 disordered regions span residues 1–139 (MTGL…TPLW) and 162–203 (DRPT…RLTD). 3 stretches are compositionally biased toward polar residues: residues 66–82 (DNTQ…QLQN), 115–133 (KAQS…NCGT), and 175–196 (YGSS…TNDG). The segment at 128 to 152 (CSNCGTKRTPLWRRSPTGATICNAC) adopts a GATA-type 1 zinc-finger fold. Residues 219 to 237 (CPGGGSCNGTGGAEGCDGC) are cystein-rich region (CRR). Residues 256–283 (HTPRTSPQVSTQGGPGSTEGDAGSSNPE) form a disordered region. The segment covering 258–267 (PRTSPQVSTQ) has biased composition (polar residues). The GATA-type 2 zinc-finger motif lies at 291 to 315 (CQNCQTTVTPLWRRDENGHPICNAC). Residues 339-609 (KRVVPAMREQ…AKAERRARLQ (271 aa)) are disordered. Positions 349-363 (SPPSATQSSNGSVSP) are enriched in polar residues. Composition is skewed to low complexity over residues 436–447 (NNHNNGETTNTH) and 492–503 (SSSSASFPNNNP). The span at 504–513 (GRFNSISSLL) shows a compositional bias: polar residues. Low complexity predominate over residues 558–568 (SHSPPRFSPSL). The span at 595–609 (VDHRDAKAERRARLQ) shows a compositional bias: basic and acidic residues. Residues 595–630 (VDHRDAKAERRARLQREAQDMREALKAKERELALLE) are a coiled coil.

The protein resides in the nucleus. Its function is as follows. GATA-type transcription repressor that regulates iron- acquisition genes through specific binding the GATA sequence element 5'-(G/A)ATC(T/A)GATAA-3' of target promoters in an iron- and zinc-dependent manner. Regulation occurs via direct binding of iron ions. Iron acquisition regulation is critical for survival under both iron-limiting conditions (to acquire essential iron) and iron-replete conditions (to limit iron toxicity). SRE1 targets include genes encoding a number of key iron-regulated factors such as those involved in siderophore biosynthesis, presumed ferric reductase activity, iron-responsive transcriptional regulation, oxidative stress response, as well as genes encoding a number of putative oxidoreductases, metabolic and mitochondrial enzymes, superoxide dismutase, and genes previously identified as induced during nitrosative stress. The sequence is that of GATA-type transcription factor SRE1 from Ajellomyces capsulatus (Darling's disease fungus).